The primary structure comprises 94 residues: Co-chaperonin GroES (94 aa).

It belongs to the GroES chaperonin family. Heptamer of 7 subunits arranged in a ring. Interacts with the chaperonin GroEL.

The protein resides in the cytoplasm. Functionally, together with the chaperonin GroEL, plays an essential role in assisting protein folding. The GroEL-GroES system forms a nano-cage that allows encapsulation of the non-native substrate proteins and provides a physical environment optimized to promote and accelerate protein folding. GroES binds to the apical surface of the GroEL ring, thereby capping the opening of the GroEL channel. This is Co-chaperonin GroES from Finegoldia magna (strain ATCC 29328 / DSM 20472 / WAL 2508) (Peptostreptococcus magnus).